Consider the following 47-residue polypeptide: Protein 0.5 (47 aa).

A signal peptide spans 1–23; that stretch reads MYMLTIGLLTALGLAVGASFGKA. The helical transmembrane segment at 24–43 threads the bilayer; it reads LGVAVGSYFTACIIIGIIKG.

It localises to the host membrane. This Escherichia phage T7 (Bacteriophage T7) protein is Protein 0.5.